A 322-amino-acid polypeptide reads, in one-letter code: Phosphatidylserine decarboxylase proenzyme (322 aa).

Catalysis depends on charge relay system; for autoendoproteolytic cleavage activity residues Asp-90, His-147, and Ser-254. Residue Ser-254 is the Schiff-base intermediate with substrate; via pyruvic acid; for decarboxylase activity of the active site. Position 254 is a pyruvic acid (Ser); by autocatalysis (Ser-254). The interval 294–322 (EVEPVPLPEEEIKAEHDASPLVDDKKDET) is disordered. Residues 303–322 (EEIKAEHDASPLVDDKKDET) show a composition bias toward basic and acidic residues.

Belongs to the phosphatidylserine decarboxylase family. PSD-B subfamily. Prokaryotic type I sub-subfamily. In terms of assembly, heterodimer of a large membrane-associated beta subunit and a small pyruvoyl-containing alpha subunit. Pyruvate is required as a cofactor. In terms of processing, is synthesized initially as an inactive proenzyme. Formation of the active enzyme involves a self-maturation process in which the active site pyruvoyl group is generated from an internal serine residue via an autocatalytic post-translational modification. Two non-identical subunits are generated from the proenzyme in this reaction, and the pyruvate is formed at the N-terminus of the alpha chain, which is derived from the carboxyl end of the proenzyme. The autoendoproteolytic cleavage occurs by a canonical serine protease mechanism, in which the side chain hydroxyl group of the serine supplies its oxygen atom to form the C-terminus of the beta chain, while the remainder of the serine residue undergoes an oxidative deamination to produce ammonia and the pyruvoyl prosthetic group on the alpha chain. During this reaction, the Ser that is part of the protease active site of the proenzyme becomes the pyruvoyl prosthetic group, which constitutes an essential element of the active site of the mature decarboxylase.

It localises to the cell membrane. The enzyme catalyses a 1,2-diacyl-sn-glycero-3-phospho-L-serine + H(+) = a 1,2-diacyl-sn-glycero-3-phosphoethanolamine + CO2. It functions in the pathway phospholipid metabolism; phosphatidylethanolamine biosynthesis; phosphatidylethanolamine from CDP-diacylglycerol: step 2/2. In terms of biological role, catalyzes the formation of phosphatidylethanolamine (PtdEtn) from phosphatidylserine (PtdSer). The protein is Phosphatidylserine decarboxylase proenzyme of Salmonella arizonae (strain ATCC BAA-731 / CDC346-86 / RSK2980).